We begin with the raw amino-acid sequence, 219 residues long: Large ribosomal subunit protein uL1 (219 aa).

The protein belongs to the universal ribosomal protein uL1 family. Part of the 50S ribosomal subunit.

Functionally, binds directly to 23S rRNA. Probably involved in E site tRNA release. Its function is as follows. Protein L1 is also a translational repressor protein, it controls the translation of its operon by binding to its mRNA. This is Large ribosomal subunit protein uL1 from Pyrococcus abyssi (strain GE5 / Orsay).